The sequence spans 833 residues: MTFYDHTAIEPKWQAFWADNHTFKTGTDASKPKFYALDMFPYPSGAGLHVGHPEGYTATDILSRFKRAQGHNVLHPMGWDAFGLPAEQYAMDTGNDPAEFTAENIANFKRQINALGFSYDWDREVNTTDPNYYKWTQWIFTKLYEKGLAYEAEVPVNWVEELGTAIANEEVLPDGTSERGGYPVVRKPMRQWMLKITAYAERLLEDLEEVDWPESIKDMQRNWIGKSTGANVTFKVKDTDKDFTVFTTRPDTLFGATYAVLAPEHALVDAITTADQAEAVADYKRQASLKSDLARTDLAKEKTGVWTGSYAINPVNGNEMPVWIADYVLASYGTGAIMAVPAHDERDWEFAKQFNLDIIPVLEGGNVEEAAFTEDGLHINSGFLDGLDKASAIAKMVEWLEAEGVGNEKVTYRLRDWLFSRQRYWGEPIPIIHWEDGTSTAVPESELPLVLPVTKDIRPSGTGESPLANVTDWLEVTREDGVKGRRETNTMPQWAGSSWYYLRYIDPHNTEKLADEELLKQWLPVDIYVGGAEHAVLHLLYARFWHKVLYDLGVVPTKEPFQKLFNQGMILGTSYRDSRGALVATDKVEKRDGSFFHLETGEELEQAPAKMSKSLKNVVNPDDVVEQYGADTLRVYEMFMGPLDASIAWSEEGLEGSRKFLDRVYRLVTTKEIVAENSGALDKVYNETVKAVTEQVDQMKFNTAIAQLMVFVNAANKEDKLFSDYAKGFVQLIAPFAPHLGEELWQALTASGESISYVPWPSYDESKLVENDVEIVVQIKGKVKAKLVVAKDLSREELQEVALANEKVQAEIAGKDIIKVIAVPNKLVNIVIK.

Residues 41-52 carry the 'HIGH' region motif; that stretch reads PYPSGAGLHVGH. A 'KMSKS' region motif is present at residues 610–614; the sequence is KMSKS. Residue Lys613 participates in ATP binding.

It belongs to the class-I aminoacyl-tRNA synthetase family.

The protein resides in the cytoplasm. The enzyme catalyses tRNA(Leu) + L-leucine + ATP = L-leucyl-tRNA(Leu) + AMP + diphosphate. The sequence is that of Leucine--tRNA ligase from Streptococcus pyogenes serotype M18 (strain MGAS8232).